The primary structure comprises 177 residues: dCTP deaminase (177 aa).

Residues 100-105 and Asp-116 contribute to the dCTP site; that span reads RSSIAR. Glu-126 acts as the Proton donor/acceptor in catalysis. DCTP is bound by residues Tyr-159 and Gln-166.

It belongs to the dCTP deaminase family. Homotrimer.

It catalyses the reaction dCTP + H2O + H(+) = dUTP + NH4(+). It participates in pyrimidine metabolism; dUMP biosynthesis; dUMP from dCTP (dUTP route): step 1/2. In terms of biological role, catalyzes the deamination of dCTP to dUTP. This Korarchaeum cryptofilum (strain OPF8) protein is dCTP deaminase.